A 165-amino-acid chain; its full sequence is Regulatory protein RecX (165 aa).

It belongs to the RecX family.

The protein resides in the cytoplasm. Functionally, modulates RecA activity. The chain is Regulatory protein RecX from Cronobacter sakazakii (strain ATCC BAA-894) (Enterobacter sakazakii).